The primary structure comprises 834 residues: Membrane-associated lipoprotein (834 aa).

The signal sequence occupies residues 1–25 (MKKNKLTTLALILPITILTPIVIAS). The N-palmitoyl cysteine moiety is linked to residue cysteine 26. The S-diacylglycerol cysteine moiety is linked to residue cysteine 26. Positions 143–237 (RLKDTFDFKL…LLEVSGFKSN (95 aa)) constitute a Lipoprotein-associated type-17 domain.

It localises to the cell membrane. The polypeptide is Membrane-associated lipoprotein (Ureaplasma parvum serovar 3 (strain ATCC 700970)).